The primary structure comprises 235 residues: Small heat shock protein, chloroplastic (235 aa).

Disordered stretches follow at residues 1–23 (MAYT…TSKI) and 51–80 (TGDN…ERRP). Residues 52–63 (GDNKDTSVDVHH) show a composition bias toward basic and acidic residues. Residues 64–74 (SSAQGGNNQGT) are compositionally biased toward polar residues. Residues 126–235 (SGTGEIRTPW…EKKVIDVQIN (110 aa)) form the sHSP domain.

It belongs to the small heat shock protein (HSP20) family. In fruits, flowers, leaves, and stems.

The protein localises to the plastid. The protein resides in the chloroplast. This is Small heat shock protein, chloroplastic (HSP21) from Solanum lycopersicum (Tomato).